Reading from the N-terminus, the 271-residue chain is 5'-AMP-activated protein kinase subunit beta-2 (271 aa).

Positions 1–47 (MGNTTSERVSGERHGAKAARAEGGGHGPGKEHKIMVGSTDDPSVFSL) are disordered. Ser38 carries the phosphoserine; by ULK1 modification. Thr39 is modified (phosphothreonine; by ULK1). A Phosphoserine; by ULK1 modification is found at Ser68. Residues Ser94 and Ser107 each carry the phosphoserine modification. Phosphothreonine is present on Thr147. Ser157 and Ser169 each carry phosphoserine. Ser173 carries the phosphoserine; by ULK1 modification. At Ser183 the chain carries Phosphoserine.

It belongs to the 5'-AMP-activated protein kinase beta subunit family. AMPK is a heterotrimer of an alpha catalytic subunit (PRKAA1 or PRKAA2), a beta (PRKAB1 or PRKAB2) and a gamma non-catalytic subunits (PRKAG1, PRKAG2 or PRKAG3). In terms of processing, phosphorylated when associated with the catalytic subunit (PRKAA1 or PRKAA2). Phosphorylated by ULK1 and ULK2; leading to negatively regulate AMPK activity and suggesting the existence of a regulatory feedback loop between ULK1, ULK2 and AMPK.

Functionally, non-catalytic subunit of AMP-activated protein kinase (AMPK), an energy sensor protein kinase that plays a key role in regulating cellular energy metabolism. In response to reduction of intracellular ATP levels, AMPK activates energy-producing pathways and inhibits energy-consuming processes: inhibits protein, carbohydrate and lipid biosynthesis, as well as cell growth and proliferation. AMPK acts via direct phosphorylation of metabolic enzymes, and by longer-term effects via phosphorylation of transcription regulators. Also acts as a regulator of cellular polarity by remodeling the actin cytoskeleton; probably by indirectly activating myosin. Beta non-catalytic subunit acts as a scaffold on which the AMPK complex assembles, via its C-terminus that bridges alpha (PRKAA1 or PRKAA2) and gamma subunits (PRKAG1, PRKAG2 or PRKAG3). The chain is 5'-AMP-activated protein kinase subunit beta-2 (Prkab2) from Rattus norvegicus (Rat).